The primary structure comprises 107 residues: MIPGEIKVNHALGDIELNAGRETQTIQVANHGDRPIQIGSHYHFYEVNDALKFERENTLGFRLNIPAGMAVRFEPGQSRTVELVAFSGKREIYGFHGKVMGKLESEN.

Belongs to the urease beta subunit family. In terms of assembly, heterotrimer of UreA (gamma), UreB (beta) and UreC (alpha) subunits. Three heterotrimers associate to form the active enzyme.

Its subcellular location is the cytoplasm. It catalyses the reaction urea + 2 H2O + H(+) = hydrogencarbonate + 2 NH4(+). It functions in the pathway nitrogen metabolism; urea degradation; CO(2) and NH(3) from urea (urease route): step 1/1. The polypeptide is Urease subunit beta (Escherichia coli).